A 264-amino-acid chain; its full sequence is uncharacterized protein (264 aa).

Residues Met-1 to Ser-22 form the signal peptide. Residue Cys-23 is the site of N-palmitoyl cysteine attachment. Cys-23 carries the S-diacylglycerol cysteine lipid modification.

The protein belongs to the staphylococcal tandem lipoprotein family.

Its subcellular location is the cell membrane. This is an uncharacterized protein from Staphylococcus aureus (strain MRSA252).